The sequence spans 235 residues: Sugar fermentation stimulation protein homolog (235 aa).

The protein belongs to the SfsA family.

This Azotobacter vinelandii (strain DJ / ATCC BAA-1303) protein is Sugar fermentation stimulation protein homolog.